Here is a 138-residue protein sequence, read N- to C-terminus: Large ribosomal subunit protein uL16 (138 aa).

Residues 1–13 (MLQPARRKYRKEQ) show a composition bias toward basic residues. The tract at residues 1 to 20 (MLQPARRKYRKEQKGRNTGV) is disordered.

It belongs to the universal ribosomal protein uL16 family. As to quaternary structure, part of the 50S ribosomal subunit.

Binds 23S rRNA and is also seen to make contacts with the A and possibly P site tRNAs. The sequence is that of Large ribosomal subunit protein uL16 from Verminephrobacter eiseniae (strain EF01-2).